A 194-amino-acid chain; its full sequence is CASP-like protein 2C1 (194 aa).

Topologically, residues 1–18 (MSSYMEAAAAARAAEAKT) are cytoplasmic. A helical membrane pass occupies residues 19 to 39 (EGLLRGACALLAAAAALLVGL). Over 40–59 (NTQTETVLFIRKKATVKDVQ) the chain is Extracellular. Residues 60 to 80 (ALWVLAMAAAAAAGYHLLQLL) traverse the membrane as a helical segment. Over 81–109 (RCFYLSRFADGKPCRHRRAIAWLCFLLDK) the chain is Cytoplasmic. A helical transmembrane segment spans residues 110-130 (GCAYITFATTVAAAQACVVAL). The Extracellular segment spans residues 131-151 (YGTHALQWTKLCNIYTRFCEQ). The chain crosses the membrane as a helical span at residues 152-172 (VAGSLVCAMLAAVGTALLSVV). Topologically, residues 173-194 (SARNLFRLYPSMLSPPPSSFVG) are cytoplasmic.

This sequence belongs to the Casparian strip membrane proteins (CASP) family. As to quaternary structure, homodimer and heterodimers.

It localises to the cell membrane. This is CASP-like protein 2C1 from Oryza sativa subsp. japonica (Rice).